A 294-amino-acid polypeptide reads, in one-letter code: Eukaryotic translation initiation factor 3 subunit G (294 aa).

Residues 1-22 (MQTFHHQDTGSEDFRQNTMDEK) are compositionally biased toward basic and acidic residues. Disordered regions lie at residues 1-42 (MQTF…DGTK) and 164-211 (GGMG…SDDD). The span at 30 to 42 (STPQITQNADGTK) shows a compositional bias: polar residues. A compositionally biased stretch (gly residues) spans 193–205 (GPGGPGGPGGAAG). Residues 214 to 292 (LTLRVTNLSE…LIMKVDYSKK (79 aa)) enclose the RRM domain.

This sequence belongs to the eIF-3 subunit G family. Component of the eukaryotic translation initiation factor 3 (eIF-3) complex.

The protein resides in the cytoplasm. In terms of biological role, RNA-binding component of the eukaryotic translation initiation factor 3 (eIF-3) complex, which is involved in protein synthesis of a specialized repertoire of mRNAs and, together with other initiation factors, stimulates binding of mRNA and methionyl-tRNAi to the 40S ribosome. The eIF-3 complex specifically targets and initiates translation of a subset of mRNAs involved in cell proliferation. This subunit can bind 18S rRNA. The chain is Eukaryotic translation initiation factor 3 subunit G from Yarrowia lipolytica (strain CLIB 122 / E 150) (Yeast).